A 378-amino-acid chain; its full sequence is Cytochrome b (378 aa).

The next 4 membrane-spanning stretches (helical) occupy residues 34–54 (FGSL…FLAM), 78–99 (WLLR…YLHV), 114–134 (WLIG…GYVL), and 179–199 (FFTF…IHLL). Heme b-binding residues include histidine 84 and histidine 98. Residues histidine 183 and histidine 197 each coordinate heme b. Histidine 202 is an a ubiquinone binding site. Transmembrane regions (helical) follow at residues 227–247 (FKDI…VLIS), 289–309 (LGGV…PFYN), 321–341 (INQV…WIGA), and 348–368 (YVLI…VNPL).

Belongs to the cytochrome b family. As to quaternary structure, the main subunits of complex b-c1 are: cytochrome b, cytochrome c1 and the Rieske protein. Heme b is required as a cofactor.

It localises to the mitochondrion inner membrane. Functionally, component of the ubiquinol-cytochrome c reductase complex (complex III or cytochrome b-c1 complex) that is part of the mitochondrial respiratory chain. The b-c1 complex mediates electron transfer from ubiquinol to cytochrome c. Contributes to the generation of a proton gradient across the mitochondrial membrane that is then used for ATP synthesis. In Drosophila sechellia (Fruit fly), this protein is Cytochrome b (mt:Cyt-b).